The primary structure comprises 931 residues: MTSAVWAVVSEQEAGGPDKDQPLRDDIRLLGRILGDTVREQEGDAIYELVETIRQTSIRFHRDADEAARQELNALLESMTPEVAVQIIRAFSYFSHLANIAEDQHHSRRNRAHAVAGSAPRPGTLANALARAEKAGIGAAELRAFFDAALVSPVLTAHPTEVRRKSTMNREMEIADLLDLKERLQATPQEAREQDEKLRRAVLTLWQTALLRKFKLTVLDEVQNGLSYYDYTFLAEVPRLLCALEDHLAEQEGGEPGAELPPFLRIGSWIGGDRDGNPFVTADVLRETVRQHRDRVMAFYLEQVGLLVTELSLAKRLVAVSEDLTALAERSGDRAPEHREEPYRLALVGIHNRLKATVAAQKAADDGKTMGAAEDGHLPYPDAAAFRADLDILYRSLMANGSAILARGRLRHVRRAVDSFGFHLASLDLRQNSDVHERTVADLLEQAAPGTNYHALDEEARIAVLRAELTNPRPLASPFLSYTEETRSELAILRTAAEAHARLGKTVIPNAIISKAEGISDMLELALLLKEVGLVSATGESAINVIPLFETIGDLQACGPVMDRLLALPEYRALVDSRGGEQEVMLGYSDSNKDGGFVSSGWELYKAEIALIEVFARHKVKLRLFHGRGGSVGRGGGPSYDAILAQPAGAVSGQIRITEQGEIISSKYSNPENGRRNLEILVSATLESTLLEAEQASPRPEFLAAMEELSKTAFTAYRSLVYETPGFEDYFWSSTVISEIATLNIGSRPASRNKTRAIEALRAIPWVFSWSQCRLMLPGWYGFGTAIAAFVEARPVDGIAFLQSMYREWPFFRTLLSNMDMVLSKSSLAVASRYAELVPDEELRTRIFSRISAEYQSAITSLLAIMGQKKLLEANPLLDRSIRNRFPYLDPLNHIQVELLKLHRSDAGSDHVLHGIQLTINGISAGLRNSG.

Residues His-158 and Lys-593 contribute to the active site.

The protein belongs to the PEPCase type 1 family. The cofactor is Mg(2+).

The enzyme catalyses oxaloacetate + phosphate = phosphoenolpyruvate + hydrogencarbonate. Functionally, forms oxaloacetate, a four-carbon dicarboxylic acid source for the tricarboxylic acid cycle. The chain is Phosphoenolpyruvate carboxylase from Azorhizobium caulinodans (strain ATCC 43989 / DSM 5975 / JCM 20966 / LMG 6465 / NBRC 14845 / NCIMB 13405 / ORS 571).